Reading from the N-terminus, the 160-residue chain is Peptide deformylase 1 (160 aa).

Cys90 and His132 together coordinate Fe cation. The active site involves Glu133. His136 lines the Fe cation pocket.

Belongs to the polypeptide deformylase family. Fe(2+) serves as cofactor.

The catalysed reaction is N-terminal N-formyl-L-methionyl-[peptide] + H2O = N-terminal L-methionyl-[peptide] + formate. Functionally, removes the formyl group from the N-terminal Met of newly synthesized proteins. Requires at least a dipeptide for an efficient rate of reaction. N-terminal L-methionine is a prerequisite for activity but the enzyme has broad specificity at other positions. This Bacillus subtilis (strain 168) protein is Peptide deformylase 1 (defA).